A 1482-amino-acid chain; its full sequence is Cystic fibrosis transmembrane conductance regulator (1482 aa).

Residues M1–F77 lie on the Cytoplasmic side of the membrane. A helical transmembrane segment spans residues F78–Q98. The 285-residue stretch at F81–L365 folds into the ABC transmembrane type-1 1 domain. Residues P99–Y122 are Extracellular-facing. Residues L123 to H146 traverse the membrane as a helical segment. Residues H147 to L195 are Cytoplasmic-facing. A helical transmembrane segment spans residues A196–W216. Over E217–S222 the chain is Extracellular. Residues A223–M243 form a helical membrane-spanning segment. At M244 to K298 the chain is on the cytoplasmic side. Residues A299–F319 form a helical membrane-spanning segment. Residues L320 to T339 lie on the Extracellular side of the membrane. The chain crosses the membrane as a helical span at residues I340–V358. The Cytoplasmic segment spans residues Q359–N859. ATP-binding positions include W401, G458 to T465, and Q493. The 224-residue stretch at S423–G646 folds into the ABC transporter 1 domain. C524 carries the S-palmitoyl cysteine lipid modification. Phosphoserine is present on residues S549 and S660. A disordered R region region spans residues S654 to E832. A Phosphoserine; by PKA modification is found at S670. A Phosphoserine modification is found at S686. Residue K688 forms a Glycyl lysine isopeptide (Lys-Gly) (interchain with G-Cter in ubiquitin) linkage. Phosphoserine is present on residues S700 and S712. A Phosphothreonine modification is found at T717. S737, S768, S791, S796, and S814 each carry phosphoserine. The helical transmembrane segment at L860–V880 threads the bilayer. The ABC transmembrane type-1 2 domain maps to L860 to S1156. At A881–I919 the chain is on the extracellular side. 2 N-linked (GlcNAc...) asparagine glycosylation sites follow: N895 and N901. A discontinuously helical transmembrane segment spans residues Y920–H940. The Cytoplasmic segment spans residues T941–T991. A helical membrane pass occupies residues I992–L1012. Residues K1013–P1014 lie on the Extracellular side of the membrane. The chain crosses the membrane as a helical span at residues Y1015–L1035. Residues Q1036–T1096 lie on the Cytoplasmic side of the membrane. The helical transmembrane segment at L1097–F1117 threads the bilayer. Topologically, residues I1118–G1131 are extracellular. The chain crosses the membrane as a helical span at residues I1132–I1152. Residues D1153–L1482 are Cytoplasmic-facing. The ABC transporter 2 domain occupies I1212–P1445. ATP contacts are provided by residues Y1221 and G1246–S1253. The tract at residues R1388–L1482 is interaction with GORASP2. C1397 carries S-palmitoyl cysteine lipidation. Phosphoserine occurs at positions 1446 and 1458. The tract at residues Q1454–L1482 is disordered. Positions E1472–L1482 are enriched in acidic residues. The short motif at T1480–L1482 is the PDZ-binding element.

This sequence belongs to the ABC transporter superfamily. ABCC family. CFTR transporter (TC 3.A.1.202) subfamily. As to quaternary structure, monomer; does not require oligomerization for channel activity. May form oligomers in the membrane. Interacts with SLC26A3, SLC26A6 and NHERF1. Interacts with SHANK2. Interacts with MYO6. Interacts (via C-terminus) with GOPC (via PDZ domain); this promotes CFTR internalization and thereby decreases channel activity. Interacts with SLC4A7 through NHERF1. Found in a complex with MYO5B and RAB11A. Interacts with ANO1. Interacts with SLC26A8. Interacts with AHCYL1; the interaction increases CFTR activity. Interacts with CSE1L. The core-glycosylated form interacts with GORASP2 (via PDZ GRASP-type 1 domain) in respone to ER stress. Interacts with MARCHF2; the interaction leads to CFTR ubiqtuitination and degradation. Interacts with ADGRG2. N-glycosylated. Post-translationally, phosphorylated; cAMP treatment promotes phosphorylation and activates the channel. Dephosphorylation decreases the ATPase activity (in vitro). Phosphorylation at PKA sites activates the channel. Phosphorylation at PKC sites enhances the response to phosphorylation by PKA. Phosphorylated by AMPK; this inhibits channel activity. In terms of processing, ubiquitinated, leading to its degradation in the lysosome. Deubiquitination by USP10 in early endosomes enhances its endocytic recycling to the cell membrane. Ubiquitinated by RNF185 during ER stress. Ubiquitinated by MARCHF2.

It localises to the apical cell membrane. The protein resides in the early endosome membrane. It is found in the cell membrane. The protein localises to the recycling endosome membrane. Its subcellular location is the endoplasmic reticulum membrane. It localises to the nucleus. The catalysed reaction is ATP + H2O + closed Cl(-) channel = ADP + phosphate + open Cl(-) channel.. It carries out the reaction chloride(in) = chloride(out). It catalyses the reaction hydrogencarbonate(in) = hydrogencarbonate(out). The enzyme catalyses ATP + H2O = ADP + phosphate + H(+). Its function is as follows. Epithelial ion channel that plays an important role in the regulation of epithelial ion and water transport and fluid homeostasis. Mediates the transport of chloride ions across the cell membrane. Possesses an intrinsic ATPase activity and utilizes ATP to gate its channel; the passive flow of anions through the channel is gated by cycles of ATP binding and hydrolysis by the ATP-binding domains. The ion channel is also permeable to HCO(3)(-); selectivity depends on the extracellular chloride concentration. Exerts its function also by modulating the activity of other ion channels and transporters. Contributes to the regulation of the pH and the ion content of the epithelial fluid layer. Modulates the activity of the epithelial sodium channel (ENaC) complex, in part by regulating the cell surface expression of the ENaC complex. May regulate bicarbonate secretion and salvage in epithelial cells by regulating the transporter SLC4A7. Can inhibit the chloride channel activity of ANO1. Plays a role in the chloride and bicarbonate homeostasis during sperm epididymal maturation and capacitation. This Rhinolophus ferrumequinum (Greater horseshoe bat) protein is Cystic fibrosis transmembrane conductance regulator.